Here is a 324-residue protein sequence, read N- to C-terminus: MIGMALTAIISTMLIMVLLVVAGTFTWVERRVLGFVQERLGPNRVGPFGFLQWVADTVKILTKEDRPPPGADRVAYILAPMVAATPVLAGFGVVAFGDGLALANIDVGVMFLLGMMGLTVYGVVLGALASHSRFALMGGLRAAAQMLGYEAFLGLSLLGVVMIAGSLSLTEIVHAQRDVWFVLLQPFGAALFCIAGVAAAHRLPFDLPESENDLVAGYLTEYTGMSFGLFFLGEYLAVLLVASLAVTLFFGGWLGPVWLGPYLPGPIWFGLKVGVIALIFIWIRATLPRPRYDQLVRFAWKIALPLALANLLLTGLIVVARSAP.

A run of 9 helical transmembrane segments spans residues 1 to 21, 77 to 97, 109 to 129, 147 to 167, 179 to 199, 214 to 234, 238 to 258, 263 to 283, and 298 to 318; these read MIGM…LLVV, ILAP…VAFG, VMFL…GALA, LGYE…AGSL, VWFV…GVAA, LVAG…FLGE, VLLV…GPVW, LPGP…FIWI, and FAWK…GLIV.

The protein belongs to the complex I subunit 1 family. In terms of assembly, NDH-1 is composed of 14 different subunits. Subunits NuoA, H, J, K, L, M, N constitute the membrane sector of the complex.

The protein resides in the cell inner membrane. The enzyme catalyses a quinone + NADH + 5 H(+)(in) = a quinol + NAD(+) + 4 H(+)(out). In terms of biological role, NDH-1 shuttles electrons from NADH, via FMN and iron-sulfur (Fe-S) centers, to quinones in the respiratory chain. The immediate electron acceptor for the enzyme in this species is believed to be ubiquinone. Couples the redox reaction to proton translocation (for every two electrons transferred, four hydrogen ions are translocated across the cytoplasmic membrane), and thus conserves the redox energy in a proton gradient. This subunit may bind ubiquinone. The chain is NADH-quinone oxidoreductase subunit H 2 from Rhodopseudomonas palustris (strain BisB18).